The chain runs to 145 residues: RNA polymerase-binding transcription factor DksA (145 aa).

Zn(2+) is bound by residues Cys108, Cys111, Cys129, and Cys132. The dksA C4-type zinc-finger motif lies at 108–132 (CDCCGEEIGIRRLEARPTADLCIDC).

Belongs to the DksA family. As to quaternary structure, interacts directly with the RNA polymerase.

The protein localises to the cytoplasm. Functionally, transcription factor that acts by binding directly to the RNA polymerase (RNAP). Required for negative regulation of rRNA expression and positive regulation of several amino acid biosynthesis promoters. Also required for regulation of fis expression. The protein is RNA polymerase-binding transcription factor DksA of Haemophilus influenzae (strain ATCC 51907 / DSM 11121 / KW20 / Rd).